The sequence spans 349 residues: Protein-glutamate methylesterase/protein-glutamine glutaminase (349 aa).

Residues arginine 5–methionine 122 enclose the Response regulatory domain. Aspartate 56 is subject to 4-aspartylphosphate. The CheB-type methylesterase domain occupies leucine 152 to glycine 344. Catalysis depends on residues serine 164, histidine 190, and aspartate 286.

Belongs to the CheB family. Phosphorylated by CheA. Phosphorylation of the N-terminal regulatory domain activates the methylesterase activity.

It localises to the cytoplasm. It catalyses the reaction [protein]-L-glutamate 5-O-methyl ester + H2O = L-glutamyl-[protein] + methanol + H(+). It carries out the reaction L-glutaminyl-[protein] + H2O = L-glutamyl-[protein] + NH4(+). Functionally, involved in chemotaxis. Part of a chemotaxis signal transduction system that modulates chemotaxis in response to various stimuli. Catalyzes the demethylation of specific methylglutamate residues introduced into the chemoreceptors (methyl-accepting chemotaxis proteins or MCP) by CheR. Also mediates the irreversible deamidation of specific glutamine residues to glutamic acid. This Escherichia coli O6:H1 (strain CFT073 / ATCC 700928 / UPEC) protein is Protein-glutamate methylesterase/protein-glutamine glutaminase.